We begin with the raw amino-acid sequence, 1130 residues long: Integrin alpha-6 (1130 aa).

The N-terminal stretch at 1-23 (MAAAGQLCLLYLSAGLLSRLGAA) is a signal peptide. Topologically, residues 24–1050 (FNLDTREDNV…FPSKTVAQYS (1027 aa)) are extracellular. 7 FG-GAP repeats span residues 30–95 (EDNV…GPCT), 101–166 (NDAD…IEDD), 176–229 (DGRL…FFDM), 283–339 (EQPD…KSAH), 340–402 (LLPE…RWNN), 403–458 (VKPI…GINT), and 459–518 (KPTQ…VTPN). A glycan (N-linked (GlcNAc...) asparagine) is linked at N78. Intrachain disulfides connect C86-C94, C131-C154, and C175-C188. N-linked (GlcNAc...) asparagine glycans are attached at residues N223 and N323. Residues D363, N365, D367, and D371 each coordinate Ca(2+). N-linked (GlcNAc...) asparagine glycosylation is present at N409. D425, N427, D429, Y431, D433, D480, D482, N484, Y486, and D488 together coordinate Ca(2+). Disulfide bonds link C528/C535, C541/C601, C665/C671, and C765/C776. 4 N-linked (GlcNAc...) asparagine glycosylation sites follow: N770, N787, N930, and N966. 2 disulfide bridges follow: C920/C967 and C973/C978. Residue N997 is glycosylated (N-linked (GlcNAc...) asparagine). A helical transmembrane segment spans residues 1051-1076 (GVPWWIILVAILAGILMLALLVFILW). V1059 and G1064 each carry phosphoserine. Positions 1077–1083 (KCGFFKR) are interaction with HPS5. At 1077–1130 (KCGFFKRSRYDDSVPRYHAVRIRKEEREIKDEKYIDNLEKKQWITKWNENESYS) the chain is on the cytoplasmic side. A lipid anchor (S-palmitoyl cysteine; by DHHC3) is attached at C1078. A GFFKR motif motif is present at residues 1079 to 1083 (GFFKR). The residue at position 1103 (R1103) is a Phosphoserine.

This sequence belongs to the integrin alpha chain family. In terms of assembly, heterodimer of an alpha and a beta subunit. The alpha subunit is composed of a heavy and a light chain linked by a disulfide bond. Alpha-6 associates with either beta-1 (ITGB1) or beta-4 (ITGB4) to form ITGA6:ITGB1 and ITGA6:ITGB4, respectively. ITGA6:ITGB1 is found in a complex with CD9; interaction takes place in oocytes and is involved in sperm-egg fusion. ITGA6:ITGB4 is found in a ternary complex with NRG1 and ERBB3. ITGA6:ITGB4 is found in a ternary complex with IGF1 and IGF1R. ITGA6:ITGB4 interacts with IGF2. Interacts with ADAM9. Interacts with RAB21. Interacts with MDK. ITGA6:ITGB1 interacts with MDK; this interaction mediates MDK-induced neurite outgrowth. Interacts with CD82; this interaction down-regulates ITGA6-mediated cell adhesion. Isoforms containing segment A, but not segment B, are the major targets for PMA-induced phosphorylation. Phosphorylation occurs on 'Ser-1103' of isoform alpha-6X1X2A. Phosphorylation is not required for the induction of integrin alpha-6A/beta-1 high affinity but may reduce the affinity for ligand. Post-translationally, undergoes PLAU-mediated cleavage at residues Arg-634-635-Arg in a time-dependent manner to produce processed integrin alpha-6 (alpha6p). Production of alpha6p enhances prostate cancer cell invasion and migration. In terms of processing, palmitoylation by DHHC3 enhances stability and cell surface expression. In terms of tissue distribution, integrin alpha-6/beta-4 is predominantly expressed by epithelia. Isoforms containing segment X1 are ubiquitously expressed. Isoforms containing segment X1X2 are expressed in heart, kidney, placenta, colon, duodenum, myoblasts and myotubes, and in a limited number of cell lines; they are always coexpressed with the ubiquitous isoform containing segment X1. In some tissues (e.g. Salivary gland), isoforms containing cytoplasmic segment A and isoforms containing segment B are detected while in others, only isoforms containing one cytoplasmic segment are found (segment A in epidermis and segment B in kidney). Processed integrin alpha-6: Expressed at low levels in normal prostate tissue with elevated levels in prostate cancer tissue (at protein level).

Its subcellular location is the cell membrane. Integrin alpha-6/beta-1 (ITGA6:ITGB1) is a receptor for laminin on platelets. Integrin alpha-6/beta-1 (ITGA6:ITGB1) is present in oocytes and is involved in sperm-egg fusion. Integrin alpha-6/beta-4 (ITGA6:ITGB4) is a receptor for laminin in epithelial cells and it plays a critical structural role in the hemidesmosome. ITGA6:ITGB4 binds to NRG1 (via EGF domain) and this binding is essential for NRG1-ERBB signaling. ITGA6:ITGB4 binds to IGF1 and this binding is essential for IGF1 signaling. ITGA6:ITGB4 binds to IGF2 and this binding is essential for IGF2 signaling. The polypeptide is Integrin alpha-6 (ITGA6) (Homo sapiens (Human)).